The chain runs to 304 residues: N-acetylmuramic acid 6-phosphate etherase (304 aa).

The SIS domain maps to 62 to 225 (IVQAFQNGGR…TTASMVMIGK (164 aa)). The active-site Proton donor is Glu90. Residue Glu121 is part of the active site.

It belongs to the GCKR-like family. MurNAc-6-P etherase subfamily. As to quaternary structure, homodimer.

The enzyme catalyses N-acetyl-D-muramate 6-phosphate + H2O = N-acetyl-D-glucosamine 6-phosphate + (R)-lactate. Its pathway is amino-sugar metabolism; 1,6-anhydro-N-acetylmuramate degradation. The protein operates within amino-sugar metabolism; N-acetylmuramate degradation. It functions in the pathway cell wall biogenesis; peptidoglycan recycling. Specifically catalyzes the cleavage of the D-lactyl ether substituent of MurNAc 6-phosphate, producing GlcNAc 6-phosphate and D-lactate. Together with AnmK, is also required for the utilization of anhydro-N-acetylmuramic acid (anhMurNAc) either imported from the medium or derived from its own cell wall murein, and thus plays a role in cell wall recycling. The polypeptide is N-acetylmuramic acid 6-phosphate etherase (Actinobacillus pleuropneumoniae serotype 7 (strain AP76)).